A 279-amino-acid polypeptide reads, in one-letter code: Biotin synthase (279 aa).

Residues 1 to 228 form the Radical SAM core domain; the sequence is MKDIFLCSIC…SARLMIAGGR (228 aa). [4Fe-4S] cluster contacts are provided by Cys17, Cys21, and Cys24. [2Fe-2S] cluster is bound by residues Cys61, Cys96, Cys154, and Arg221.

It belongs to the radical SAM superfamily. Biotin synthase family. As to quaternary structure, homodimer. [4Fe-4S] cluster is required as a cofactor. [2Fe-2S] cluster serves as cofactor.

It carries out the reaction (4R,5S)-dethiobiotin + (sulfur carrier)-SH + 2 reduced [2Fe-2S]-[ferredoxin] + 2 S-adenosyl-L-methionine = (sulfur carrier)-H + biotin + 2 5'-deoxyadenosine + 2 L-methionine + 2 oxidized [2Fe-2S]-[ferredoxin]. The protein operates within cofactor biosynthesis; biotin biosynthesis; biotin from 7,8-diaminononanoate: step 2/2. In terms of biological role, catalyzes the conversion of dethiobiotin (DTB) to biotin by the insertion of a sulfur atom into dethiobiotin via a radical-based mechanism. This Wolinella succinogenes (strain ATCC 29543 / DSM 1740 / CCUG 13145 / JCM 31913 / LMG 7466 / NCTC 11488 / FDC 602W) (Vibrio succinogenes) protein is Biotin synthase.